Here is a 187-residue protein sequence, read N- to C-terminus: Elongation factor P (187 aa).

It belongs to the elongation factor P family.

The protein localises to the cytoplasm. It functions in the pathway protein biosynthesis; polypeptide chain elongation. Functionally, involved in peptide bond synthesis. Stimulates efficient translation and peptide-bond synthesis on native or reconstituted 70S ribosomes in vitro. Probably functions indirectly by altering the affinity of the ribosome for aminoacyl-tRNA, thus increasing their reactivity as acceptors for peptidyl transferase. This is Elongation factor P from Mycolicibacterium vanbaalenii (strain DSM 7251 / JCM 13017 / BCRC 16820 / KCTC 9966 / NRRL B-24157 / PYR-1) (Mycobacterium vanbaalenii).